The following is a 98-amino-acid chain: UPF0473 protein lp_2273 (98 aa).

The protein belongs to the UPF0473 family.

The chain is UPF0473 protein lp_2273 from Lactiplantibacillus plantarum (strain ATCC BAA-793 / NCIMB 8826 / WCFS1) (Lactobacillus plantarum).